The chain runs to 246 residues: Ureidoacrylate amidohydrolase RutB (246 aa).

The tract at residues 1–27 (MSAVTAAGYQAPQERSQSVTLPARPEP) is disordered. Catalysis depends on Asp-41, which acts as the Proton acceptor. Lys-150 is a catalytic residue. The Nucleophile role is filled by Cys-183.

It belongs to the isochorismatase family. RutB subfamily.

The enzyme catalyses (Z)-3-ureidoacrylate + H2O + H(+) = (Z)-3-aminoacrylate + NH4(+) + CO2. It catalyses the reaction (Z)-3-ureidoacrylate + H2O = (Z)-3-aminoacrylate + carbamate + H(+). The catalysed reaction is (Z)-2-methylureidoacrylate + H2O + H(+) = (Z)-2-methylaminoacrylate + NH4(+) + CO2. Its function is as follows. Hydrolyzes ureidoacrylate to form aminoacrylate and carbamate. The carbamate hydrolyzes spontaneously, thereby releasing one of the nitrogen atoms of the pyrimidine ring as ammonia and one of its carbon atoms as CO2. This Rhizobium rhizogenes (strain K84 / ATCC BAA-868) (Agrobacterium radiobacter) protein is Ureidoacrylate amidohydrolase RutB.